A 692-amino-acid polypeptide reads, in one-letter code: ATP-dependent DNA helicase DinG (692 aa).

The region spanning 16 to 293 (NLGNQLDNFI…AELAEYKKAA (278 aa)) is the Helicase ATP-binding domain. 56-63 (AGTGIGKS) is an ATP binding site. C123 is a binding site for [4Fe-4S] cluster. The DEAH box motif lies at 134-137 (NNDQ). 2 residues coordinate [4Fe-4S] cluster: C192 and C202. The DEAH box signature appears at 247 to 250 (DEAH). The Helicase C-terminal domain occupies 514–692 (LIKTLPEYLE…PPFKRVIEYS (179 aa)).

The protein belongs to the helicase family. DinG subfamily. Type 1 sub-subfamily. The cofactor is [4Fe-4S] cluster.

The catalysed reaction is Couples ATP hydrolysis with the unwinding of duplex DNA at the replication fork by translocating in the 5'-3' direction. This creates two antiparallel DNA single strands (ssDNA). The leading ssDNA polymer is the template for DNA polymerase III holoenzyme which synthesizes a continuous strand.. It carries out the reaction ATP + H2O = ADP + phosphate + H(+). Functionally, DNA-dependent ATPase and 5'-3' DNA helicase. Unwinds D-loops, R-loops, forked DNA and G-quadruplex DNA. In Photobacterium profundum (strain SS9), this protein is ATP-dependent DNA helicase DinG.